A 585-amino-acid chain; its full sequence is Pyruvate kinase (585 aa).

R32 is a binding site for substrate. 4 residues coordinate K(+): N34, S36, D66, and T67. Position 34–37 (34–37 (NFSH)) interacts with ATP. 2 residues coordinate ATP: R73 and K156. Mg(2+) is bound at residue E221. G244, D245, and T277 together coordinate substrate. D245 provides a ligand contact to Mg(2+).

It belongs to the pyruvate kinase family. The protein in the C-terminal section; belongs to the PEP-utilizing enzyme family. Mg(2+) is required as a cofactor. Requires K(+) as cofactor.

The catalysed reaction is pyruvate + ATP = phosphoenolpyruvate + ADP + H(+). Its pathway is carbohydrate degradation; glycolysis; pyruvate from D-glyceraldehyde 3-phosphate: step 5/5. This is Pyruvate kinase (pyk) from Staphylococcus aureus (strain bovine RF122 / ET3-1).